We begin with the raw amino-acid sequence, 369 residues long: Protein FAM187B (369 aa).

The first 17 residues, 1–17, serve as a signal peptide directing secretion; sequence MPPMLWLLLNFAAPALG. The Extracellular segment spans residues 18–333; that stretch reads FYFSISCPSG…PGRADSVLKG (316 aa). N-linked (GlcNAc...) asparagine glycosylation is found at asparagine 45, asparagine 68, and asparagine 130. A helical transmembrane segment spans residues 334–354; it reads LKLVLLVGTVLVLLGALLKFI. The Cytoplasmic portion of the chain corresponds to 355–369; the sequence is RPSPGKRSKQVLMVK.

Belongs to the FAM187 family.

Its subcellular location is the membrane. The chain is Protein FAM187B (FAM187B) from Macaca fascicularis (Crab-eating macaque).